The following is a 307-amino-acid chain: Fructokinase (307 aa).

This sequence belongs to the carbohydrate kinase PfkB family.

It catalyses the reaction D-fructose + ATP = D-fructose 6-phosphate + ADP + H(+). This Vibrio alginolyticus protein is Fructokinase (scrK).